Consider the following 399-residue polypeptide: MGSIRGDLQPLFVMPPPPLDEDCDDIFNSDESSWGLLSLSCFGIIMGLWFFASVCLIFGVYGSETVWLGPNSSILVKPSSIFVKSINAKELDFSKPGLQLYGFNGQSTPSGYFVNWTESRVLSVSQNSYKGWPYYLNRGTHMNISYNILPKGSAVRLVITEGMPFFYRSSLKDIAFRDTAWSWNLIQGSGMIQLDISKSKGYYLTVANLKRKDVEVELDIDVKVVLYDTKQSSYNCSFSNGECSFKMNERSPVENYAVVTSPALGQGVSIDDEWYIELSYQPRLIAYGSFTGVLLSFMLVAIHFCNKLKCCGGEGFLSEDDSVRTCLLADKGDNDCCNDVEASNKSLCAICFDAPRDCCFLPCGHCVSCYQCGTKIKRTKGRCPICRKKIMHVKRIYTA.

2 helical membrane passes run 42–62 (FGII…GVYG) and 284–304 (LIAY…AIHF). The RING-type zinc-finger motif lies at 348-387 (CAICFDAPRDCCFLPCGHCVSCYQCGTKIKRTKGRCPICR).

In terms of tissue distribution, expressed in the shoot apical meristems (SAM), root tips and inflorescences.

Its subcellular location is the endomembrane system. It localises to the vacuole membrane. It carries out the reaction S-ubiquitinyl-[E2 ubiquitin-conjugating enzyme]-L-cysteine + [acceptor protein]-L-lysine = [E2 ubiquitin-conjugating enzyme]-L-cysteine + N(6)-ubiquitinyl-[acceptor protein]-L-lysine.. Its pathway is protein modification; protein ubiquitination. Its function is as follows. Involved in pollen mitosis II (PMII) regulation during male gametogenesis. This chain is E3 ubiquitin-protein ligase APD4, found in Arabidopsis thaliana (Mouse-ear cress).